The primary structure comprises 66 residues: Large ribosomal subunit protein bL33c (66 aa).

The protein belongs to the bacterial ribosomal protein bL33 family.

It localises to the plastid. The protein localises to the chloroplast. This is Large ribosomal subunit protein bL33c from Liriodendron tulipifera (Tuliptree).